Here is a 638-residue protein sequence, read N- to C-terminus: Methyl-accepting chemotaxis protein McpQ (638 aa).

A helical membrane pass occupies residues 18–38 (LGLGFGLVLLLTLAITLTGWH). Residues 45-282 (DRGDKLGNIS…SQTEVRDAAA (238 aa)) enclose the HBM domain. Residues 287-307 (TLLTVATVLALALGLLAAWAI) form a helical membrane-spanning segment. Residues 309-361 (RQIIIPLRQTLRAAERVASGDLTQSLQVQRRDELGQLQASMHRMTQGLRELIG) form the HAMP domain. The region spanning 366–602 (GVTQIASAAE…EINRSVMNVR (237 aa)) is the Methyl-accepting transducer domain.

The protein belongs to the methyl-accepting chemotaxis (MCP) protein family.

The protein resides in the cell membrane. Functionally, chemotactic-signal transducers respond to changes in the concentration of attractants and repellents in the environment, transduce a signal from the outside to the inside of the cell, and facilitate sensory adaptation through the variation of the level of methylation. McpQ recognizes specifically citrate and citrate/metal(2+) complexes. Binds citrate/metal(2+) complexes with higher affinity than free citrate, and mediates preferentially chemotaxis toward citrate/metal(2+) complexes. The polypeptide is Methyl-accepting chemotaxis protein McpQ (Pseudomonas putida (strain ATCC 47054 / DSM 6125 / CFBP 8728 / NCIMB 11950 / KT2440)).